Consider the following 79-residue polypeptide: Cytochrome b (79 aa).

A run of 3 helical transmembrane segments spans residues 1-7, 31-52, and 67-79; these read SALFLAM, WLIRYIHANGASLFFICLYLHI, and WNIGIILLFLTMA. Heme b contacts are provided by His-37 and His-51.

Belongs to the cytochrome b family. The cytochrome bc1 complex contains 11 subunits: 3 respiratory subunits (MT-CYB, CYC1 and UQCRFS1), 2 core proteins (UQCRC1 and UQCRC2) and 6 low-molecular weight proteins (UQCRH/QCR6, UQCRB/QCR7, UQCRQ/QCR8, UQCR10/QCR9, UQCR11/QCR10 and a cleavage product of UQCRFS1). This cytochrome bc1 complex then forms a dimer. Requires heme b as cofactor.

The protein localises to the mitochondrion inner membrane. Functionally, component of the ubiquinol-cytochrome c reductase complex (complex III or cytochrome b-c1 complex) that is part of the mitochondrial respiratory chain. The b-c1 complex mediates electron transfer from ubiquinol to cytochrome c. Contributes to the generation of a proton gradient across the mitochondrial membrane that is then used for ATP synthesis. The protein is Cytochrome b (MT-CYB) of Dipodomys panamintinus (Panamint kangaroo rat).